Reading from the N-terminus, the 271-residue chain is Na(+), Li(+), K(+)/H(+) antiporter subunit B (271 aa).

The next 7 membrane-spanning stretches (helical) occupy residues I2–F22, L36–G56, W94–I114, P130–W150, I152–Q172, S193–G213, and A216–M236. The disordered stretch occupies residues T252–L271.

It belongs to the UmpA/UmpB family. In terms of assembly, heterodimer composed of UmpA and UmpB.

Its subcellular location is the cell membrane. Part of a two-component antiporter that catalyzes the efflux of Na(+), Li(+) and K(+) in exchange for external protons. Shows a preference for Na(+), followed by K(+) and Li(+). The protein is Na(+), Li(+), K(+)/H(+) antiporter subunit B of Vreelandella zhaodongensis (Halomonas zhaodongensis).